Consider the following 93-residue polypeptide: Small ribosomal subunit protein uS19 (93 aa).

It belongs to the universal ribosomal protein uS19 family.

In terms of biological role, protein S19 forms a complex with S13 that binds strongly to the 16S ribosomal RNA. The polypeptide is Small ribosomal subunit protein uS19 (Campylobacter lari (strain RM2100 / D67 / ATCC BAA-1060)).